A 316-amino-acid polypeptide reads, in one-letter code: Transaldolase (316 aa).

Lys-127 serves as the catalytic Schiff-base intermediate with substrate.

This sequence belongs to the transaldolase family. Type 2 subfamily.

The protein resides in the cytoplasm. It catalyses the reaction D-sedoheptulose 7-phosphate + D-glyceraldehyde 3-phosphate = D-erythrose 4-phosphate + beta-D-fructose 6-phosphate. The protein operates within carbohydrate degradation; pentose phosphate pathway; D-glyceraldehyde 3-phosphate and beta-D-fructose 6-phosphate from D-ribose 5-phosphate and D-xylulose 5-phosphate (non-oxidative stage): step 2/3. Transaldolase is important for the balance of metabolites in the pentose-phosphate pathway. The sequence is that of Transaldolase (tal) from Helicobacter pylori (strain ATCC 700392 / 26695) (Campylobacter pylori).